A 69-amino-acid polypeptide reads, in one-letter code: Cytoinsectotoxin-2a (69 aa).

The protein belongs to the cationic peptide 06 (cytoinsectotoxin) family. Expressed by the venom gland.

It localises to the secreted. In terms of biological role, insecticidal and antimicrobial peptide. Has insecticidal activity against larvae of flesh fly S.carnaria. Has antibacterial activity against Gram-positive bacterium B.subtilis B-501 (MIC=1.25 uM) and Gram-negative bacterium E.coli DH5alpha (MIC=2.5 uM). This is Cytoinsectotoxin-2a from Lachesana tarabaevi (Spider).